A 161-amino-acid polypeptide reads, in one-letter code: Nucleotide-binding protein Gura_0717 (161 aa).

Belongs to the YajQ family.

In terms of biological role, nucleotide-binding protein. This chain is Nucleotide-binding protein Gura_0717, found in Geotalea uraniireducens (strain Rf4) (Geobacter uraniireducens).